Consider the following 185-residue polypeptide: Pyruvate/ketoisovalerate oxidoreductases common subunit gamma (185 aa).

In terms of assembly, heterotetramer of one alpha, one beta, one delta and one gamma chain.

It carries out the reaction 2 oxidized [2Fe-2S]-[ferredoxin] + pyruvate + CoA = 2 reduced [2Fe-2S]-[ferredoxin] + acetyl-CoA + CO2 + H(+). The catalysed reaction is 3-methyl-2-oxobutanoate + 2 oxidized [2Fe-2S]-[ferredoxin] + CoA = 2-methylpropanoyl-CoA + 2 reduced [2Fe-2S]-[ferredoxin] + CO2 + H(+). The sequence is that of Pyruvate/ketoisovalerate oxidoreductases common subunit gamma (porG) from Thermococcus litoralis (strain ATCC 51850 / DSM 5473 / JCM 8560 / NS-C).